The primary structure comprises 694 residues: Phosphatase and actin regulator 4 (694 aa).

Disordered stretches follow at residues methionine 1 to valine 354 and glutamine 375 to leucine 405. Residues lysine 45 to serine 54 show a composition bias toward basic residues. A compositionally biased stretch (basic and acidic residues) spans serine 55–leucine 84. Residues glutamate 63–proline 88 form an RPEL 1 repeat. Serine 116, serine 118, serine 129, and serine 145 each carry phosphoserine. 2 stretches are compositionally biased toward low complexity: residues alanine 184 to threonine 209 and threonine 231 to alanine 249. Over residues lysine 250–proline 259 the composition is skewed to pro residues. Phosphoserine occurs at positions 264, 285, 335, and 337. A compositionally biased stretch (pro residues) spans leucine 329–proline 352. The span at glutamate 381–glutamine 392 shows a compositional bias: basic and acidic residues. Serine 420 is subject to Phosphoserine. Position 425 is a phosphothreonine (threonine 425). Phosphoserine occurs at positions 436, 446, 457, 503, 505, 549, and 582. Residues valine 467 to serine 562 are disordered. Positions serine 546–proline 559 are enriched in polar residues. RPEL repeat units lie at residues asparagine 575–asparagine 600 and arginine 613–glutamate 638. Residues glutamate 589–lysine 608 are disordered. A Phosphoserine modification is found at serine 620.

The protein belongs to the phosphatase and actin regulator family. Binds PPP1CA and actin.

It localises to the cytoplasm. Its subcellular location is the cell projection. It is found in the lamellipodium. In terms of biological role, regulator of protein phosphatase 1 (PP1) required for neural tube and optic fissure closure, and enteric neural crest cell (ENCCs) migration during development. Acts as an activator of PP1 by interacting with PPP1CA and preventing phosphorylation of PPP1CA at 'Thr-320'. During neural tube closure, localizes to the ventral neural tube and activates PP1, leading to down-regulate cell proliferation within cranial neural tissue and the neural retina. Also acts as a regulator of migration of enteric neural crest cells (ENCCs) by activating PP1, leading to dephosphorylation and subsequent activation of cofilin (COF1 or COF2) and repression of the integrin signaling through the RHO/ROCK pathway. In Mus musculus (Mouse), this protein is Phosphatase and actin regulator 4 (Phactr4).